Here is a 388-residue protein sequence, read N- to C-terminus: Succinate--CoA ligase [ADP-forming] subunit beta (388 aa).

Residues 9-246 (KDILRQFGVP…FEEEDPAEVL (238 aa)) enclose the ATP-grasp domain. ATP-binding positions include K46, 53–55 (GRG), E99, A102, and E107. Positions 201 and 215 each coordinate Mg(2+). Substrate is bound by residues N266 and 323-325 (GIM).

The protein belongs to the succinate/malate CoA ligase beta subunit family. Heterotetramer of two alpha and two beta subunits. Mg(2+) is required as a cofactor.

The catalysed reaction is succinate + ATP + CoA = succinyl-CoA + ADP + phosphate. It carries out the reaction GTP + succinate + CoA = succinyl-CoA + GDP + phosphate. It participates in carbohydrate metabolism; tricarboxylic acid cycle; succinate from succinyl-CoA (ligase route): step 1/1. In terms of biological role, succinyl-CoA synthetase functions in the citric acid cycle (TCA), coupling the hydrolysis of succinyl-CoA to the synthesis of either ATP or GTP and thus represents the only step of substrate-level phosphorylation in the TCA. The beta subunit provides nucleotide specificity of the enzyme and binds the substrate succinate, while the binding sites for coenzyme A and phosphate are found in the alpha subunit. The polypeptide is Succinate--CoA ligase [ADP-forming] subunit beta (Verminephrobacter eiseniae (strain EF01-2)).